Reading from the N-terminus, the 70-residue chain is Small ribosomal subunit protein bS21C (70 aa).

The interval 38–70 (YEKPTTERKRKKAAAVARLRKQVRRSMPPKKKY) is disordered. The segment covering 45 to 70 (RKRKKAAAVARLRKQVRRSMPPKKKY) has biased composition (basic residues).

The protein belongs to the bacterial ribosomal protein bS21 family.

The sequence is that of Small ribosomal subunit protein bS21C from Burkholderia thailandensis (strain ATCC 700388 / DSM 13276 / CCUG 48851 / CIP 106301 / E264).